A 436-amino-acid chain; its full sequence is MHKHLHHVSHTIKSYLSTLIALENLKVVAFLISLLSCLVAGSILLFTLYTSSFHEVLGLSYLQINMISSLSALGMYFCLPVLGYLADSYGPALLSLFSIWFFCPSYFVNSYLVSTQSGSVIGFCVCFCFIGLATSSLYFSSLITCARICPDHKGLAISLPITCYGLSALLGAQILKLPYFHRHDVLDLEVVFSFFAWLYLVVGIASFVSSSIVIVESELLFGVTPDEETALLELTPTRSLEPPNHRQRFVSFVKDPSAWILLVSLILNIGPMESYQNNLSSILKHTNGADLPNQVSIMAASSTGARLLLGVLSDYSSKYVCRVWLLVVVIVVGVAGQMSETSAILNGVSYGGMFTIYPTIVASIWGIDIMGSTWGSFMVAPALGSVIFSMFYGRNADSCSDCLSHYFYTTAGAMIVSCIFVLLAWKIWYARGFTRF.

A run of 7 helical transmembrane segments spans residues 27–47 (VVAF…LLFT), 66–86 (MISS…GYLA), 93–113 (LLSL…SYLV), 119–139 (SVIG…SLYF), 155–175 (LAIS…AQIL), 188–208 (LEVV…ASFV), and 249–269 (FVSF…ILNI). Asn-278 is a glycosylation site (N-linked (GlcNAc...) asparagine). Helical transmembrane passes span 295–312 (VSIM…LGVL), 325–345 (LLVV…SAIL), 347–367 (GVSY…IWGI), 373–393 (TWGS…MFYG), and 410–430 (TAGA…IWYA).

This sequence belongs to the major facilitator superfamily.

The protein localises to the vacuole membrane. In terms of biological role, probable transporter. The sequence is that of Probable transporter MCH1 (MCH1) from Candida albicans (strain SC5314 / ATCC MYA-2876) (Yeast).